The following is a 490-amino-acid chain: Betaine aldehyde dehydrogenase (490 aa).

Positions 27 and 93 each coordinate K(+). 150–152 (GAW) serves as a coordination point for NAD(+). Lys162 serves as the catalytic Charge relay system. 176–179 (KPSE) serves as a coordination point for NAD(+). Val180 contributes to the K(+) binding site. 230 to 233 (GTDT) serves as a coordination point for NAD(+). Leu246 contributes to the K(+) binding site. The Proton acceptor role is filled by Glu252. NAD(+)-binding residues include Gly254, Cys286, and Glu387. Cys286 functions as the Nucleophile in the catalytic mechanism. Position 286 is a cysteine sulfenic acid (-SOH) (Cys286). The K(+) site is built by Lys457 and Gly460. Glu464 functions as the Charge relay system in the catalytic mechanism.

The protein belongs to the aldehyde dehydrogenase family. As to quaternary structure, dimer of dimers. K(+) is required as a cofactor.

It catalyses the reaction betaine aldehyde + NAD(+) + H2O = glycine betaine + NADH + 2 H(+). The protein operates within amine and polyamine biosynthesis; betaine biosynthesis via choline pathway; betaine from betaine aldehyde: step 1/1. Involved in the biosynthesis of the osmoprotectant glycine betaine. Catalyzes the irreversible oxidation of betaine aldehyde to the corresponding acid. The chain is Betaine aldehyde dehydrogenase from Pseudomonas savastanoi pv. phaseolicola (strain 1448A / Race 6) (Pseudomonas syringae pv. phaseolicola (strain 1448A / Race 6)).